The primary structure comprises 95 residues: UPF0473 protein GWCH70_2487 (95 aa).

Belongs to the UPF0473 family.

In Geobacillus sp. (strain WCH70), this protein is UPF0473 protein GWCH70_2487.